Consider the following 956-residue polypeptide: Glutamate receptor ionotropic, kainate 4 (956 aa).

The first 20 residues, 1 to 20, serve as a signal peptide directing secretion; that stretch reads MPRVSAPLVLLPAWLVMVAC. Residues 21-545 lie on the Extracellular side of the membrane; it reads SPHSLRIAAI…YFSFLDPFSP (525 aa). Asn-158, Asn-220, Asn-272, Asn-286, Asn-323, Asn-408, Asn-415, and Asn-479 each carry an N-linked (GlcNAc...) asparagine glycan. Residues Gly-500, Thr-502, and Arg-507 each coordinate L-glutamate. The chain crosses the membrane as a helical span at residues 546 to 566; that stretch reads GVWLFMLLAYLAVSCVLFLVA. Residues 567-623 are Cytoplasmic-facing; it reads RLTPYEWYSPHPCAQGRCNLLVNQYSLGNSLWFPVGGFMQQGSTIAPRALSTRCVSG. Residues 624-644 traverse the membrane as a helical segment; that stretch reads VWWAFTLIIISSYTANLAAFL. The Extracellular portion of the chain corresponds to 645–804; that stretch reads TVQRMDVPIE…HRAKGLGMEN (160 aa). L-glutamate contacts are provided by Ser-674, Ser-675, and Glu-723. Asn-736 carries N-linked (GlcNAc...) asparagine glycosylation. The helical transmembrane segment at 805–825 threads the bilayer; sequence IGGIFVVLICGLIVAIFMAML. Residues 826–956 are Cytoplasmic-facing; that stretch reads EFLWTLRHSE…EKTTNSSEPE (131 aa). Disordered regions lie at residues 863 to 889 and 931 to 956; these read RRRA…TLSN and LRAR…SEPE. The span at 939–948 shows a compositional bias: basic and acidic residues; the sequence is RSEESLEWEK.

It belongs to the glutamate-gated ion channel (TC 1.A.10.1) family. GRIK4 subfamily. As to quaternary structure, homodimer. Can form functional heteromeric receptors with GRIK1, GRIK2 and GRIK3.

Its subcellular location is the cell membrane. The protein resides in the postsynaptic cell membrane. It is found in the presynaptic cell membrane. Its function is as follows. Ionotropic glutamate receptor that functions as a cation-permeable ligand-gated ion channel. Cannot form functional channels on its own. Shows channel activity only in heteromeric assembly with GRIK1, GRIK2 and GRIK3 subunits. The polypeptide is Glutamate receptor ionotropic, kainate 4 (GRIK4) (Homo sapiens (Human)).